Consider the following 362-residue polypeptide: Serine/threonine-protein phosphatase 2A activator 1 (362 aa).

Residues Met1–Pro10 show a composition bias toward pro residues. Disordered regions lie at residues Met1–Arg28 and Asn339–Arg362. Residues Val340–Gly351 show a composition bias toward basic and acidic residues.

The protein belongs to the PTPA-type PPIase family.

Its subcellular location is the cytoplasm. It is found in the nucleus. It catalyses the reaction [protein]-peptidylproline (omega=180) = [protein]-peptidylproline (omega=0). In terms of biological role, PPIases accelerate the folding of proteins. It catalyzes the cis-trans isomerization of proline imidic peptide bonds in oligopeptides. Acts as a regulatory subunit for PP2A-like phosphatases modulating their activity or substrate specificity, probably by inducing a conformational change in the catalytic subunit, a direct target of the PPIase. Can reactivate inactive phosphatase PP2A-phosphatase methylesterase complexes (PP2Ai) in presence of ATP and Mg(2+) by dissociating the inactive form from the complex. In Cryptococcus neoformans var. neoformans serotype D (strain B-3501A) (Filobasidiella neoformans), this protein is Serine/threonine-protein phosphatase 2A activator 1 (RRD1).